The primary structure comprises 98 residues: Essential MCU regulator, mitochondrial (98 aa).

A helical membrane pass occupies residues 52 to 72 (ITPFGLFGIIATVIPGLLIGA).

This sequence belongs to the SMDT1/EMRE family.

The protein localises to the mitochondrion inner membrane. Functionally, essential regulatory subunit of the mitochondrial calcium uniporter (mcu) channel, a protein that mediates calcium uptake into mitochondria. The protein is Essential MCU regulator, mitochondrial of Anopheles gambiae (African malaria mosquito).